The sequence spans 386 residues: Succinate--CoA ligase [ADP-forming] subunit beta (386 aa).

Residues 9–244 (KQILKKYGAV…LNEEDPTEID (236 aa)) enclose the ATP-grasp domain. ATP is bound by residues K46, 53–55 (GRG), E99, S102, and E107. Mg(2+)-binding residues include N199 and D213. Residues N264 and 321–323 (GIM) each bind substrate.

Belongs to the succinate/malate CoA ligase beta subunit family. As to quaternary structure, heterotetramer of two alpha and two beta subunits. The cofactor is Mg(2+).

It catalyses the reaction succinate + ATP + CoA = succinyl-CoA + ADP + phosphate. It carries out the reaction GTP + succinate + CoA = succinyl-CoA + GDP + phosphate. It functions in the pathway carbohydrate metabolism; tricarboxylic acid cycle; succinate from succinyl-CoA (ligase route): step 1/1. In terms of biological role, succinyl-CoA synthetase functions in the citric acid cycle (TCA), coupling the hydrolysis of succinyl-CoA to the synthesis of either ATP or GTP and thus represents the only step of substrate-level phosphorylation in the TCA. The beta subunit provides nucleotide specificity of the enzyme and binds the substrate succinate, while the binding sites for coenzyme A and phosphate are found in the alpha subunit. The sequence is that of Succinate--CoA ligase [ADP-forming] subunit beta from Pelagibacter ubique (strain HTCC1062).